We begin with the raw amino-acid sequence, 256 residues long: Diaminopimelate epimerase (256 aa).

Residues Asn-11 and Asn-63 each coordinate substrate. Cys-72 (proton donor) is an active-site residue. Substrate is bound by residues 73 to 74 (GN), Asn-169, and 187 to 188 (ER). Cys-197 acts as the Proton acceptor in catalysis. 198-199 (GT) lines the substrate pocket.

It belongs to the diaminopimelate epimerase family. In terms of assembly, homodimer.

The protein localises to the cytoplasm. It catalyses the reaction (2S,6S)-2,6-diaminopimelate = meso-2,6-diaminopimelate. The protein operates within amino-acid biosynthesis; L-lysine biosynthesis via DAP pathway; DL-2,6-diaminopimelate from LL-2,6-diaminopimelate: step 1/1. Its function is as follows. Catalyzes the stereoinversion of LL-2,6-diaminopimelate (L,L-DAP) to meso-diaminopimelate (meso-DAP), a precursor of L-lysine and an essential component of the bacterial peptidoglycan. The sequence is that of Diaminopimelate epimerase from Flavobacterium psychrophilum (strain ATCC 49511 / DSM 21280 / CIP 103535 / JIP02/86).